Here is a 553-residue protein sequence, read N- to C-terminus: Zinc finger protein Elbow (553 aa).

2 disordered regions span residues 59-243 and 388-407; these read STKQ…MHSP and GGGGGGSSKSSGSQGGSGGS. 2 stretches are compositionally biased toward low complexity: residues 96 to 110 and 121 to 134; these read SPVSSHSSSVSTGSV and SSSSSKPTPTTFKP. Polar residues-rich tracts occupy residues 137–146, 153–173, and 224–236; these read PNNNISNITT, TNLSSNNTSAQQRVKTPKSMT, and TASTTPGRSNSKE. Residues 287–480 are self-association; the sequence is SASAAAAAAS…PDAVLSAAAA (194 aa). Residues 287–553 are interaction with noc; it reads SASAAAAAAS…YGPRMGSSHP (267 aa). Positions 388–406 are enriched in gly residues; that stretch reads GGGGGGSSKSSGSQGGSGG. The C2H2-type zinc-finger motif lies at 437–466; it reads YVCSWIGSDAAYCGKRFGTSDDLFQHLRTH.

The protein belongs to the Elbow/Noc family. In terms of assembly, self-associates. Interacts with gro and noc.

In terms of biological role, may negatively regulate Notch-induced cell proliferation in the eye-head primordium. May act in leg and wing primordia to negatively regulate body-wall specifying genes and thereby promote appendage formation. Required for tracheal development. In Drosophila melanogaster (Fruit fly), this protein is Zinc finger protein Elbow (elB).